The primary structure comprises 181 residues: Translationally-controlled tumor protein homolog (181 aa).

The 181-residue stretch at 1 to 181 (MLIFKDAFTD…VKEALIEEKQ (181 aa)) folds into the TCTP domain.

This sequence belongs to the TCTP family.

The protein localises to the cytoplasm. Its function is as follows. Involved in calcium binding and microtubule stabilization. This chain is Translationally-controlled tumor protein homolog, found in Brugia malayi (Filarial nematode worm).